Consider the following 158-residue polypeptide: Ankyrin repeat domain-containing protein 37 (158 aa).

ANK repeat units lie at residues 1–25 (MLLL…SVNA), 30–59 (CEQS…DLNQ), and 63–92 (FGEA…QIDL). A Nuclear localization signal motif is present at residues 129 to 149 (EQPNKDHCVQVLRLKRSFGSE).

In terms of processing, ubiquitinated by the CRL2(FEM1B) complex, leading to its degradation.

The protein localises to the nucleus. The protein resides in the cytoplasm. The polypeptide is Ankyrin repeat domain-containing protein 37 (ANKRD37) (Bos taurus (Bovine)).